Here is a 274-residue protein sequence, read N- to C-terminus: Cytochrome b-c1 complex subunit Rieske, mitochondrial (274 aa).

The segment at 29-49 is disordered; sequence XXXXXXXXTPEPPVLDPKRPI. Residues 79-103 lie on the Mitochondrial matrix side of the membrane; sequence SHTDIKVPDFSDYRRSEVLDKTKSS. The helical transmembrane segment at 104–140 threads the bilayer; that stretch reads RESSDARKVFSYMVTATTAVGVTYAAKSIVTQFISSM. Topologically, residues 141 to 274 are mitochondrial intermembrane; the sequence is SASADVLAMS…FLSDDMVVVG (134 aa). Residues 187 to 272 enclose the Rieske domain; sequence EAAVELSQLR…YEFLSDDMVV (86 aa). [2Fe-2S] cluster-binding residues include cysteine 217, histidine 219, cysteine 236, histidine 239, and serine 241. Cysteine 222 and cysteine 238 form a disulfide bridge.

This sequence belongs to the Rieske iron-sulfur protein family. In terms of assembly, component of the ubiquinol-cytochrome c oxidoreductase (cytochrome b-c1 complex, complex III, CIII), a multisubunit enzyme composed of 11 subunits. The complex is composed of 3 respiratory subunits cytochrome b, cytochrome c1 and Rieske protein UQCRFS1, 2 core protein subunits UQCRC1/QCR1 and UQCRC2/QCR2, and 6 low-molecular weight protein subunits UQCRH/QCR6, UQCRB/QCR7, UQCRQ/QCR8, UQCR10/QCR9, UQCR11/QCR10 and subunit 9, the cleavage product of Rieske protein UQCRFS1. The complex exists as an obligatory dimer and forms supercomplexes (SCs) in the inner mitochondrial membrane with NADH-ubiquinone oxidoreductase (complex I, CI) and cytochrome c oxidase (complex IV, CIV), resulting in different assemblies (supercomplex SCI(1)III(2)IV(1) and megacomplex MCI(2)III(2)IV(2)). Incorporation of the Rieske protein UQCRFS1 is the penultimate step in complex III assembly. Interacts with TTC19, which is involved in the clearance of UQCRFS1 fragments. As to quaternary structure, component of the ubiquinol-cytochrome c oxidoreductase (cytochrome b-c1 complex, complex III, CIII). Subunit 9 corresponds to the mitochondrial targeting sequence (MTS) of Rieske protein UQCRFS1. It is retained after processing and incorporated inside complex III, where it remains bound to the complex and localizes between the 2 core subunits UQCRC1/QCR1 and UQCRC2/QCR2. [2Fe-2S] cluster is required as a cofactor. In terms of processing, proteolytic processing is necessary for the correct insertion of UQCRFS1 in the complex III dimer. Several fragments are generated during UQCRFS1 insertion, most probably due to the endogenous matrix-processing peptidase (MPP) activity of the 2 core protein subunits UQCRC1/QCR1 and UQCRC2/QCR2, which are homologous to the 2 mitochondrial-processing peptidase (MPP) subunits beta-MPP and alpha-MPP respectively. The action of the protease is also necessary for the clearance of the UQCRFS1 fragments.

Its subcellular location is the mitochondrion inner membrane. It carries out the reaction a quinol + 2 Fe(III)-[cytochrome c](out) = a quinone + 2 Fe(II)-[cytochrome c](out) + 2 H(+)(out). Functionally, component of the ubiquinol-cytochrome c oxidoreductase, a multisubunit transmembrane complex that is part of the mitochondrial electron transport chain which drives oxidative phosphorylation. The respiratory chain contains 3 multisubunit complexes succinate dehydrogenase (complex II, CII), ubiquinol-cytochrome c oxidoreductase (cytochrome b-c1 complex, complex III, CIII) and cytochrome c oxidase (complex IV, CIV), that cooperate to transfer electrons derived from NADH and succinate to molecular oxygen, creating an electrochemical gradient over the inner membrane that drives transmembrane transport and the ATP synthase. The cytochrome b-c1 complex catalyzes electron transfer from ubiquinol to cytochrome c, linking this redox reaction to translocation of protons across the mitochondrial inner membrane, with protons being carried across the membrane as hydrogens on the quinol. In the process called Q cycle, 2 protons are consumed from the matrix, 4 protons are released into the intermembrane space and 2 electrons are passed to cytochrome c. The Rieske protein is a catalytic core subunit containing a [2Fe-2S] iron-sulfur cluster. It cycles between 2 conformational states during catalysis to transfer electrons from the quinol bound in the Q(0) site in cytochrome b to cytochrome c1. Incorporation of UQCRFS1 is the penultimate step in complex III assembly. Component of the ubiquinol-cytochrome c oxidoreductase (cytochrome b-c1 complex, complex III, CIII). UQCRFS1 undergoes proteolytic processing once it is incorporated in the complex III dimer. One of the fragments, called subunit 9, corresponds to its mitochondrial targeting sequence (MTS). The proteolytic processing is necessary for the correct insertion of UQCRFS1 in the complex III dimer, but the persistence of UQCRFS1-derived fragments may prevent newly imported UQCRFS1 to be processed and assembled into complex III and is detrimental for the complex III structure and function. This chain is Cytochrome b-c1 complex subunit Rieske, mitochondrial (UQCRFS1), found in Saimiri sciureus (Common squirrel monkey).